The following is a 378-amino-acid chain: MMKERMRFKSNLFKIVNGVLIDLPSPRNFTFWWNFGSLLGLVLSIQLVTGIFLAMHYSCDSLLSFESVCHILRDVNEGWIIRLVHANGASFFFICLYCHIGRGMYFGSYMQTKTWIMGVLLFILVMAAAFLGYVLPWGQMSFWGATVITNLFSAIPYIGGDLVYWMWGGFSVGNSTLTRFFSLHFLVPFLVSLGAMLHIFFLHTTGSNNPLGVVADSDKIPFHIYYSAKDLLGFFFMFFFIIFISFLYPNLLGEPDNFIPANPLLTPHHIVPEWYFLFAYAILRSIPNKLGGVLGLLCALLVLFSLPLTHSNFFKSNALYIISRYFFWLFIVSFLMLTIGGGQPVCEPYVMCSQVWSCLYFTYFILCGPLRIFQDYYL.

4 consecutive transmembrane segments (helical) span residues 35 to 55 (FGSLLGLVLSIQLVTGIFLAM), 79 to 101 (WIIRLVHANGASFFFICLYCHIG), 114 to 134 (TWIMGVLLFILVMAAAFLGYV), and 180 to 200 (FFSLHFLVPFLVSLGAMLHIF). Heme b is bound by residues histidine 85 and histidine 99. Histidine 184 and histidine 198 together coordinate heme b. Residue histidine 203 participates in a ubiquinone binding. 4 helical membrane-spanning segments follow: residues 226–246 (YSAKDLLGFFFMFFFIIFISF), 290–310 (LGGVLGLLCALLVLFSLPLTH), 326–346 (FFWLFIVSFLMLTIGGGQPVC), and 350–370 (VMCSQVWSCLYFTYFILCGPL).

The protein belongs to the cytochrome b family. The main subunits of complex b-c1 are: cytochrome b, cytochrome c1 and the Rieske protein. Requires heme b as cofactor.

It localises to the mitochondrion inner membrane. Functionally, component of the ubiquinol-cytochrome c reductase complex (complex III or cytochrome b-c1 complex) that is part of the mitochondrial respiratory chain. The b-c1 complex mediates electron transfer from ubiquinol to cytochrome c. Contributes to the generation of a proton gradient across the mitochondrial membrane that is then used for ATP synthesis. This is Cytochrome b (mt:Cyt-b) from Paraspadella gotoi (Arrow worm).